A 462-amino-acid chain; its full sequence is GTPase Der (462 aa).

2 consecutive EngA-type G domains span residues 3–166 (PVIA…ITEM) and 175–348 (IKIA…HSAI). Residues 9–16 (GRPNVGKS), 56–60 (DTGGI), 118–121 (NKTD), 181–188 (GRPNVGKS), 228–232 (DTAGV), and 293–296 (NKWD) contribute to the GTP site. One can recognise a KH-like domain in the interval 349–433 (QSFSTPKLTR…PLKIEFKGGQ (85 aa)).

This sequence belongs to the TRAFAC class TrmE-Era-EngA-EngB-Septin-like GTPase superfamily. EngA (Der) GTPase family. In terms of assembly, associates with the 50S ribosomal subunit.

In terms of biological role, GTPase that plays an essential role in the late steps of ribosome biogenesis. This is GTPase Der from Legionella pneumophila (strain Lens).